A 596-amino-acid chain; its full sequence is Ferredoxin--nitrite reductase, chloroplastic (596 aa).

The N-terminal 28 residues, 1–28, are a transit peptide targeting the chloroplast; it reads MASSASLQRFLPPYPHAAASRCRPPGVR. A disordered region spans residues 1 to 56; the sequence is MASSASLQRFLPPYPHAAASRCRPPGVRARPVQSSTVSAPSSSTPAADEAVSAERL. A compositionally biased stretch (low complexity) spans 31 to 47; sequence PVQSSTVSAPSSSTPAA. [4Fe-4S] cluster contacts are provided by C474, C480, C515, and C519. C519 is a siroheme binding site.

It belongs to the nitrite and sulfite reductase 4Fe-4S domain family. As to quaternary structure, monomer. The cofactor is siroheme. [4Fe-4S] cluster serves as cofactor.

Its subcellular location is the plastid. It localises to the chloroplast. The catalysed reaction is 6 oxidized [2Fe-2S]-[ferredoxin] + NH4(+) + 2 H2O = nitrite + 6 reduced [2Fe-2S]-[ferredoxin] + 8 H(+). The protein operates within nitrogen metabolism; nitrate reduction (assimilation). Functionally, catalyzes the six-electron reduction of nitrite to ammonium. In Oryza sativa subsp. japonica (Rice), this protein is Ferredoxin--nitrite reductase, chloroplastic.